A 170-amino-acid polypeptide reads, in one-letter code: Transcriptional repressor NrdR (170 aa).

A zinc finger lies at 3–34 (CPFCGTQDTKVVDSRLVSEGAQVRRRRTCIHC). Residues 49 to 139 (PKLIKSDGSR…VYRSFKDISE (91 aa)) form the ATP-cone domain. The segment at 151–170 (SVSIPKSKKTAPESKKEDQA) is disordered. Positions 160 to 170 (TAPESKKEDQA) are enriched in basic and acidic residues.

The protein belongs to the NrdR family. Zn(2+) is required as a cofactor.

Its function is as follows. Negatively regulates transcription of bacterial ribonucleotide reductase nrd genes and operons by binding to NrdR-boxes. This is Transcriptional repressor NrdR from Marinomonas sp. (strain MWYL1).